The chain runs to 294 residues: 4-diphosphocytidyl-2-C-methyl-D-erythritol kinase (294 aa).

K15 is a catalytic residue. 101–111 lines the ATP pocket; it reads PSEAGLGGGSS. Residue D143 is part of the active site.

The protein belongs to the GHMP kinase family. IspE subfamily.

It carries out the reaction 4-CDP-2-C-methyl-D-erythritol + ATP = 4-CDP-2-C-methyl-D-erythritol 2-phosphate + ADP + H(+). The protein operates within isoprenoid biosynthesis; isopentenyl diphosphate biosynthesis via DXP pathway; isopentenyl diphosphate from 1-deoxy-D-xylulose 5-phosphate: step 3/6. Its function is as follows. Catalyzes the phosphorylation of the position 2 hydroxy group of 4-diphosphocytidyl-2C-methyl-D-erythritol. This is 4-diphosphocytidyl-2-C-methyl-D-erythritol kinase from Fusobacterium nucleatum subsp. nucleatum (strain ATCC 25586 / DSM 15643 / BCRC 10681 / CIP 101130 / JCM 8532 / KCTC 2640 / LMG 13131 / VPI 4355).